Reading from the N-terminus, the 318-residue chain is NADH-ubiquinone oxidoreductase chain 1 (318 aa).

Helical transmembrane passes span 2 to 22, 76 to 96, 102 to 122, 146 to 166, 171 to 191, 217 to 237, 253 to 273, and 294 to 314; these read FMIN…FLTL, TLAL…YPLI, LLFI…SGWA, LAII…STLI, YLWL…STLA, AGPF…MNAL, ETYT…FLWV, and LPLT…ASCI.

Belongs to the complex I subunit 1 family. As to quaternary structure, core subunit of respiratory chain NADH dehydrogenase (Complex I) which is composed of 45 different subunits.

The protein localises to the mitochondrion inner membrane. The enzyme catalyses a ubiquinone + NADH + 5 H(+)(in) = a ubiquinol + NAD(+) + 4 H(+)(out). Core subunit of the mitochondrial membrane respiratory chain NADH dehydrogenase (Complex I) which catalyzes electron transfer from NADH through the respiratory chain, using ubiquinone as an electron acceptor. Essential for the catalytic activity and assembly of complex I. This Lemur catta (Ring-tailed lemur) protein is NADH-ubiquinone oxidoreductase chain 1 (MT-ND1).